The following is a 157-amino-acid chain: S-ribosylhomocysteine lyase (157 aa).

Residues H54, H58, and C124 each coordinate Fe cation.

This sequence belongs to the LuxS family. Homodimer. The cofactor is Fe cation.

It carries out the reaction S-(5-deoxy-D-ribos-5-yl)-L-homocysteine = (S)-4,5-dihydroxypentane-2,3-dione + L-homocysteine. Functionally, involved in the synthesis of autoinducer 2 (AI-2) which is secreted by bacteria and is used to communicate both the cell density and the metabolic potential of the environment. The regulation of gene expression in response to changes in cell density is called quorum sensing. Catalyzes the transformation of S-ribosylhomocysteine (RHC) to homocysteine (HC) and 4,5-dihydroxy-2,3-pentadione (DPD). The chain is S-ribosylhomocysteine lyase from Lactobacillus acidophilus (strain ATCC 700396 / NCK56 / N2 / NCFM).